The chain runs to 401 residues: Subtilisin-like protease 7 (401 aa).

Residues 1–20 (MGFITKAIPLALAAASVING) form the signal peptide. The propeptide occupies 21 to 119 (AEILETRAGV…IERDARVQIN (99 aa)). The Inhibitor I9 domain maps to 36–118 (KYIVVMNDGM…YIERDARVQI (83 aa)). Asn58 carries N-linked (GlcNAc...) asparagine glycosylation. The Peptidase S8 domain maps to 129 to 401 (SWGLARVGSR…SKLINNGSGM (273 aa)). Catalysis depends on charge relay system residues Asp161 and His193. Asn223 and Asn253 each carry an N-linked (GlcNAc...) asparagine glycan. Ser347 (charge relay system) is an active-site residue. A glycan (N-linked (GlcNAc...) asparagine) is linked at Asn397.

This sequence belongs to the peptidase S8 family.

The protein localises to the secreted. Secreted subtilisin-like serine protease with keratinolytic activity that contributes to pathogenicity. This is Subtilisin-like protease 7 (SUB7) from Trichophyton tonsurans (Scalp ringworm fungus).